Here is a 744-residue protein sequence, read N- to C-terminus: Palmitoyltransferase ZDHHC5-A (744 aa).

Residues 1–11 (MPSGSMSGGVS) are compositionally biased toward gly residues. The interval 1 to 25 (MPSGSMSGGVSGPTSPPHPTVPSRP) is disordered. Residues 1–30 (MPSGSMSGGVSGPTSPPHPTVPSRPLRPSR) are Cytoplasmic-facing. Residues 31 to 51 (YVPVSAATAFLVGSTTLFFCF) traverse the membrane as a helical segment. At 52–61 (TCPWLSEQFS) the chain is on the extracellular side. Residues 62–82 (VAVPIYNGVMFMFVLANFCMA) traverse the membrane as a helical segment. Residues 83–167 (TFMDPGIFPR…IGRRNYRYFF (85 aa)) lie on the Cytoplasmic side of the membrane. Residues 121–171 (KWCSTCRFYRPPRCSHCSVCDNCVEDFDHHCPWVNNCIGRRNYRYFFLFLL) enclose the DHHC domain. The active-site S-palmitoyl cysteine intermediate is the cysteine 151. The helical transmembrane segment at 168–188 (LFLLSLTAHIMGVFGFGLLFI) threads the bilayer. Residues 189–208 (LYHTQQLDRVHSAVTMAVMC) are Extracellular-facing. Residues 209 to 229 (VAGLFFIPVAGLTGFHVVLVA) traverse the membrane as a helical segment. Residues 230–744 (RGRTTNEQVT…VGGTTYEISV (515 aa)) are Cytoplasmic-facing. Disordered regions lie at residues 314-523 (SLEM…PVVG), 556-645 (QHAV…SLSY), and 664-744 (SVAG…EISV). Positions 369–393 (TYSSPGKNHTALTHAYANQSSQQPG) are enriched in polar residues. Residues 398–413 (PSLDGREGGGAERSGA) are compositionally biased toward basic and acidic residues. Gly residues predominate over residues 415–428 (RTGGGPGGPPGSGI). A compositionally biased stretch (polar residues) spans 460 to 501 (THNAPPSEATTSTSYKSLANQTPPQAARNGSLSYDSLLTPSE). Over residues 571–584 (PERERERLLHDSQA) the composition is skewed to basic and acidic residues. Residues 585 to 601 (QHHHHHHHHHHHHRPPR) are compositionally biased toward basic residues. Composition is skewed to low complexity over residues 621–630 (RTRSTDTTHP) and 689–723 (PKPS…SPAH). Gly residues predominate over residues 725-737 (PGGGVKKVTGVGG).

Belongs to the DHHC palmitoyltransferase family. ERF2/ZDHHC9 subfamily.

The protein resides in the cell membrane. It catalyses the reaction L-cysteinyl-[protein] + hexadecanoyl-CoA = S-hexadecanoyl-L-cysteinyl-[protein] + CoA. Functionally, palmitoyltransferase that catalyzes the addition of palmitate onto various protein substrates and is involved in a variety of cellular processes. The sequence is that of Palmitoyltransferase ZDHHC5-A from Danio rerio (Zebrafish).